The chain runs to 753 residues: Translation initiation factor IF-2 (753 aa).

The disordered stretch occupies residues 1–166 (MSEKPRRDTG…PVMRPRGPVA (166 aa)). Low complexity-rich tracts occupy residues 19 to 43 (STGQ…ATGA), 71 to 81 (NARPAAPANAR), and 102 to 122 (TPAP…TNTR). The segment covering 133–146 (PQPEEREREREAVL) has biased composition (basic and acidic residues). The segment covering 153-162 (TTTRPVMRPR) has biased composition (low complexity). The 170-residue stretch at 249 to 418 (PRPPVVTIMG…LLVADLEDLR (170 aa)) folds into the tr-type G domain. The G1 stretch occupies residues 258-265 (GHVDHGKT). 258–265 (GHVDHGKT) lines the GTP pocket. The G2 stretch occupies residues 283 to 287 (GITQH). Positions 304 to 307 (DTPG) are G3. GTP contacts are provided by residues 304–308 (DTPGH) and 358–361 (NKID). Residues 358 to 361 (NKID) form a G4 region. The interval 394–396 (SAR) is G5.

The protein belongs to the TRAFAC class translation factor GTPase superfamily. Classic translation factor GTPase family. IF-2 subfamily.

The protein localises to the cytoplasm. One of the essential components for the initiation of protein synthesis. Protects formylmethionyl-tRNA from spontaneous hydrolysis and promotes its binding to the 30S ribosomal subunits. Also involved in the hydrolysis of GTP during the formation of the 70S ribosomal complex. The polypeptide is Translation initiation factor IF-2 (Chloroflexus aggregans (strain MD-66 / DSM 9485)).